Reading from the N-terminus, the 89-residue chain is Small ribosomal subunit protein uS15 (89 aa).

This sequence belongs to the universal ribosomal protein uS15 family. As to quaternary structure, part of the 30S ribosomal subunit. Forms a bridge to the 50S subunit in the 70S ribosome, contacting the 23S rRNA.

One of the primary rRNA binding proteins, it binds directly to 16S rRNA where it helps nucleate assembly of the platform of the 30S subunit by binding and bridging several RNA helices of the 16S rRNA. In terms of biological role, forms an intersubunit bridge (bridge B4) with the 23S rRNA of the 50S subunit in the ribosome. The protein is Small ribosomal subunit protein uS15 of Ruegeria sp. (strain TM1040) (Silicibacter sp.).